A 285-amino-acid polypeptide reads, in one-letter code: Ubiquinone biosynthesis protein COQ4, mitochondrial (285 aa).

The transit peptide at 1-11 directs the protein to the mitochondrion; it reads MPPAVRQGMRT. Residues His-166, Asp-167, His-170, and Glu-182 each contribute to the Zn(2+) site.

It belongs to the COQ4 family. As to quaternary structure, component of a multi-subunit COQ enzyme complex, composed of at least COQ3, COQ4, COQ5, COQ6, COQ7 and COQ9. Requires Zn(2+) as cofactor.

Its subcellular location is the mitochondrion inner membrane. The enzyme catalyses a 4-hydroxy-3-methoxy-5-(all-trans-polyprenyl)benzoate + H(+) = a 2-methoxy-6-(all-trans-polyprenyl)phenol + CO2. It functions in the pathway cofactor biosynthesis; ubiquinone biosynthesis. Functionally, lyase that catalyzes the C1-decarboxylation of 4-hydroxy-3-methoxy-5-(all-trans-polyprenyl)benzoic acid into 2-methoxy-6-(all-trans-polyprenyl)phenol during ubiquinone biosynthesis. The polypeptide is Ubiquinone biosynthesis protein COQ4, mitochondrial (Paracoccidioides lutzii (strain ATCC MYA-826 / Pb01) (Paracoccidioides brasiliensis)).